Consider the following 95-residue polypeptide: Integration host factor subunit beta (95 aa).

The protein belongs to the bacterial histone-like protein family. Heterodimer of an alpha and a beta chain.

Functionally, this protein is one of the two subunits of integration host factor, a specific DNA-binding protein that functions in genetic recombination as well as in transcriptional and translational control. This is Integration host factor subunit beta from Colwellia psychrerythraea (strain 34H / ATCC BAA-681) (Vibrio psychroerythus).